A 578-amino-acid polypeptide reads, in one-letter code: Forkhead box protein P1 (578 aa).

The segment at 208–233 adopts a C2H2-type zinc-finger fold; the sequence is GVCKWPGCETICEDFPSFLKHLNSEH. The segment at 250-271 is leucine-zipper; it reads VQQLELQLSKDKERLQAMMSHL. The ctbp1-binding stretch occupies residues 284–288; it reads PLNLV. Polar residues predominate over residues 293–305; it reads LSKTASEASPQSL. The disordered stretch occupies residues 293 to 325; sequence LSKTASEASPQSLPHTPTTPTAPLTPITQGPSV. Positions 306–320 are enriched in low complexity; that stretch reads PHTPTTPTAPLTPIT. The segment at residues 366–456 is a DNA-binding region (fork-head); the sequence is RPPFTYASLI…PQKISGSPTL (91 aa). The interval 511–578 is disordered; it reads MEHTSSNGSD…EDDPVNDDME (68 aa). The segment covering 515 to 527 has biased composition (low complexity); it reads SSNGSDSSPGRSP. A compositionally biased stretch (acidic residues) spans 568-578; sequence YEDDPVNDDME.

In terms of assembly, dimerization is required for DNA-binding. Isoform a, but not isoform b, interacts with ctbp1. All isoforms show similar spatial expression. Localized to the animal hemisphere of early cleavage stage embryos. At tailbud stages, expressed in regions of the brain, eye and the splanchnic mesodermal layer of the lateral plate mesoderm surrounding the gut. At stage 35, expressed within the lens of the eye, in distinct regions of the head mesenchyme and in the area anterior to the gut. In the brain the anterior-most expression is restricted to the outer region of the mesencephalon. With ongoing development, additional expression is found in the curling gut.

It is found in the nucleus. Functionally, transcriptional repressor. The polypeptide is Forkhead box protein P1 (Xenopus laevis (African clawed frog)).